A 104-amino-acid chain; its full sequence is Vacuolar ATPase assembly integral membrane protein VMA21 (104 aa).

The Cytoplasmic segment spans residues 1-21 (MSNRVSTGKMAMAPQESVQPA). A helical transmembrane segment spans residues 22–42 (VLYKLVLFALLMAVVPIGTYF). Over 43–65 (STLNYLWDGASRCGFPSGLCSTT) the chain is Lumenal. Residues 66-86 (FAAISAIAAANLILVGYVVVA) traverse the membrane as a helical segment. Residues 87–104 (FREDAASRTGPLPEKKTS) are Cytoplasmic-facing. A Prevents secretion from ER motif is present at residues 101 to 104 (KKTS).

It belongs to the VMA21 family.

It localises to the endoplasmic reticulum membrane. It is found in the endoplasmic reticulum-Golgi intermediate compartment membrane. Its subcellular location is the cytoplasmic vesicle. The protein resides in the COPII-coated vesicle membrane. In terms of biological role, required for the assembly of the V0 complex of the vacuolar ATPase (V-ATPase) in the endoplasmic reticulum. The polypeptide is Vacuolar ATPase assembly integral membrane protein VMA21 (Cryptococcus neoformans var. neoformans serotype D (strain B-3501A) (Filobasidiella neoformans)).